The primary structure comprises 317 residues: Thymidylate synthase (317 aa).

DUMP-binding positions include Arg40 and Arg167–Arg168. Catalysis depends on Cys187, which acts as the Nucleophile. DUMP is bound by residues Arg216 to Asp219, Asn227, and His257 to Tyr259. Asp219 provides a ligand contact to (6R)-5,10-methylene-5,6,7,8-tetrahydrofolate.

It belongs to the thymidylate synthase family. As to quaternary structure, homodimer.

The enzyme catalyses dUMP + (6R)-5,10-methylene-5,6,7,8-tetrahydrofolate = 7,8-dihydrofolate + dTMP. Its pathway is pyrimidine metabolism; dTTP biosynthesis. The sequence is that of Thymidylate synthase (TMP1) from Cryptococcus neoformans var. neoformans serotype D (strain B-3501A) (Filobasidiella neoformans).